The sequence spans 236 residues: MTKRYWNIDLEEMMRAGVHFGHGTRKWNPRMAPYISAKRKGIHIINLTRTARFLSEACDLVFDAASRGKQFLIVGTKNKAADLVSRAAIRARCHYVNKKWLGGMLTNWSTTEKRLHKFRDLRTEQKTEGFNRLPKRDAAVLKRQLSRLETYLGGIKYMTGLPDIVIIIDQQEEYTALRECITLGIPTISLIDTNCNPDLADISIPANDDAIASIRFILNKLVFAICEGRSSYIQNY.

Belongs to the universal ribosomal protein uS2 family.

The protein localises to the plastid. The protein resides in the chloroplast. This Draba nemorosa (Woodland whitlowgrass) protein is Small ribosomal subunit protein uS2c (rps2).